We begin with the raw amino-acid sequence, 729 residues long: Solute carrier family 15 member 2 (729 aa).

Positions 1 to 34 (MNPFQQNESKETLFSPVSTEETPPRLSSPAKKTP) are disordered. Residues 1–57 (MNPFQQNESKETLFSPVSTEETPPRLSSPAKKTPPKICGSNYPLSIAFIVVNEFCER) are Cytoplasmic-facing. At serine 9 the chain carries Phosphoserine. Residue threonine 12 is modified to Phosphothreonine. A Phosphoserine modification is found at serine 28. The chain crosses the membrane as a helical span at residues 58-78 (FSYYGMKAVLTLYFLYFLHWN). At 79–87 (EDTSTSVYH) the chain is on the extracellular side. Residues 88-108 (AFSSLCYFTPILGAAIADSWL) form a helical membrane-spanning segment. The Cytoplasmic portion of the chain corresponds to 109–113 (GKFKT). The helical transmembrane segment at 114 to 134 (IIYLSLVNVLGHVIKSLSAFP) threads the bilayer. The Extracellular segment spans residues 135 to 139 (ILGGK). The helical transmembrane segment at 140–160 (VVHTVLSLVGLCLIALGTGGI) threads the bilayer. The Cytoplasmic portion of the chain corresponds to 161-183 (KPCVAAFGGDQFEEKHAEERTRY). A helical transmembrane segment spans residues 184-204 (FSGFYLAINAGSLISTFITPM). Topologically, residues 205–217 (LRGDVQCFGEDCY) are extracellular. A helical transmembrane segment spans residues 218–238 (ALAFGVPGLLMVIALVVFAMG). The Cytoplasmic segment spans residues 239–295 (SKMYKKPPPEGNIVAQVVKCIWFAISNRFKNRSEDIPKRQHWLDWAAEKYPKQLIMD). The helical transmembrane segment at 296–316 (VKTLTRVLFLYIPLPMFWALL) threads the bilayer. The Extracellular segment spans residues 317-343 (DQQGSRWTLQATKMNGNLGFFVLQPDQ). Residues 344-364 (MQVLNPLLVLIFIPLFDLVIY) traverse the membrane as a helical segment. Over 365-380 (RLISKCGINFTSLRKM) the chain is Cytoplasmic. A helical membrane pass occupies residues 381-401 (AVGMVLACLAFAAAATVEIKI). Residues 402–611 (NEMAPPQPGS…PANKVSIAWQ (210 aa)) are Extracellular-facing. Residues 402–611 (NEMAPPQPGS…PANKVSIAWQ (210 aa)) are extracellular domain (ECD). N-linked (GlcNAc...) asparagine glycans are attached at residues asparagine 435, asparagine 472, asparagine 508, asparagine 528, and asparagine 587. Residues 612–632 (LPQYALVTAGEVMFSVTGLEF) traverse the membrane as a helical segment. The Cytoplasmic portion of the chain corresponds to 633-643 (SYSQAPSSMKS). A helical membrane pass occupies residues 644–664 (VLQAAWLLTVAIGNIIVLVVA). Over 665–674 (QFSGLVQWAE) the chain is Extracellular. The helical transmembrane segment at 675–695 (FVLFSCLLLVVCLIFSIMGYY) threads the bilayer. Residues 696 to 729 (YIPIKSEDIQGPEDKQIPHMQGNMINLETKKTKL) are Cytoplasmic-facing.

This sequence belongs to the major facilitator superfamily. Proton-dependent oligopeptide transporter (POT/PTR) (TC 2.A.17) family. Interacts (via extracellular domain region) with trypsin. In terms of tissue distribution, strongly expressed in kidney. Also detected in brain, lung, liver and heart.

It localises to the apical cell membrane. The protein resides in the cytoplasmic vesicle. It is found in the phagosome membrane. The protein localises to the cell membrane. It catalyses the reaction a dipeptide(out) + 2 H(+)(out) = a dipeptide(in) + 2 H(+)(in). It carries out the reaction N-acetyl-D-muramoyl-L-alanyl-D-isoglutamine(out) + 3 H(+)(out) = N-acetyl-D-muramoyl-L-alanyl-D-isoglutamine(in) + 3 H(+)(in). The enzyme catalyses glycyl-L-leucine(out) + 2 H(+)(out) = glycyl-L-leucine(in) + 2 H(+)(in). The catalysed reaction is glycyl-L-lysine(out) + 2 H(+)(out) = glycyl-L-lysine(in) + 2 H(+)(in). It catalyses the reaction glycyl-L-glutamate(out) + 3 H(+)(out) = glycyl-L-glutamate(in) + 3 H(+)(in). It carries out the reaction L-alanyl-L-alanine(out) + 2 H(+)(out) = L-alanyl-L-alanine(in) + 2 H(+)(in). The enzyme catalyses an L-amino acid tripeptide(out) + 2 H(+)(out) = an L-amino acid tripeptide(in) + 2 H(+)(in). The catalysed reaction is carnosine(out) + 2 H(+)(out) = carnosine(in) + 2 H(+)(in). Its function is as follows. Proton-coupled amino-acid transporter that transports oligopeptides of 2 to 4 amino acids with a preference for dipeptides. Transports neutral and anionic dipeptides with a proton to peptide stoichiometry of 2:1 or 3:1. In kidney, involved in the absorption of circulating di- and tripeptides from the glomerular filtrate. Can also transport beta-lactam antibiotics, such as the aminocephalosporin cefadroxil, and other antiviral and anticancer drugs. Transports the dipeptide-like aminopeptidase inhibitor bestatin. Also able to transport carnosine. Involved in innate immunity by promoting the detection of microbial pathogens by NOD-like receptors (NLRs). Mediates transport of bacterial peptidoglycans across the plasma membrane or, in macrophages, the phagosome membrane: catalyzes the transport of certain bacterial peptidoglycans, such as muramyl dipeptide (MDP), the NOD2 ligand. The polypeptide is Solute carrier family 15 member 2 (Oryctolagus cuniculus (Rabbit)).